The following is a 433-amino-acid chain: 23S rRNA (uracil(1939)-C(5))-methyltransferase RlmD (433 aa).

The 59-residue stretch at 10-68 folds into the TRAM domain; it reads RTTTRQIITVSVNDLDSFGQGVARHNGKTLFIPGLLPQENAEVTVTEDKKQYARAKVVR. [4Fe-4S] cluster is bound by residues cysteine 81, cysteine 87, cysteine 90, and cysteine 162. 6 residues coordinate S-adenosyl-L-methionine: glutamine 265, phenylalanine 294, asparagine 299, glutamate 315, asparagine 342, and aspartate 363. The active-site Nucleophile is cysteine 389.

This sequence belongs to the class I-like SAM-binding methyltransferase superfamily. RNA M5U methyltransferase family. RlmD subfamily.

The catalysed reaction is uridine(1939) in 23S rRNA + S-adenosyl-L-methionine = 5-methyluridine(1939) in 23S rRNA + S-adenosyl-L-homocysteine + H(+). Catalyzes the formation of 5-methyl-uridine at position 1939 (m5U1939) in 23S rRNA. The chain is 23S rRNA (uracil(1939)-C(5))-methyltransferase RlmD from Escherichia coli (strain UTI89 / UPEC).